Here is a 297-residue protein sequence, read N- to C-terminus: 4-diphosphocytidyl-2-C-methyl-D-erythritol kinase (297 aa).

The active site involves Lys10. An ATP-binding site is contributed by 94–104 (PVAAGLAGGSS). Residue Asp136 is part of the active site.

Belongs to the GHMP kinase family. IspE subfamily.

It carries out the reaction 4-CDP-2-C-methyl-D-erythritol + ATP = 4-CDP-2-C-methyl-D-erythritol 2-phosphate + ADP + H(+). It functions in the pathway isoprenoid biosynthesis; isopentenyl diphosphate biosynthesis via DXP pathway; isopentenyl diphosphate from 1-deoxy-D-xylulose 5-phosphate: step 3/6. Functionally, catalyzes the phosphorylation of the position 2 hydroxy group of 4-diphosphocytidyl-2C-methyl-D-erythritol. This Shouchella clausii (strain KSM-K16) (Alkalihalobacillus clausii) protein is 4-diphosphocytidyl-2-C-methyl-D-erythritol kinase.